A 1302-amino-acid chain; its full sequence is Multidrug resistance protein homolog 65 (1302 aa).

Residues 1 to 23 (MERDEVSTSSSEGKSQEEAPMAE) are disordered. The Cytoplasmic portion of the chain corresponds to 1 to 48 (MERDEVSTSSSEGKSQEEAPMAEGLEPTEPIAFLKLFRFSTYGEIGWL). Positions 48 to 369 (LFFGFIMCCI…TAPFLESFAT (322 aa)) constitute an ABC transmembrane type-1 1 domain. A helical transmembrane segment spans residues 49–69 (FFGFIMCCIKALTLPAVVIIY). Residues 70–118 (SEFTSMLVDRAMQFGTSSNVHALPLFGGGKTLTNASREENNEALYDDSI) are Extracellular-facing. N103 carries N-linked (GlcNAc...) asparagine glycosylation. Residues 119–147 (SYGILLTIASVVMFISGIFSVDVFNMVAL) form a helical membrane-spanning segment. Residues 148–194 (RQVTRMRIKLFSSVIRQDIGWHDLASKQNFTQSMVDDVEKIRDGISE) lie on the Cytoplasmic side of the membrane. The chain crosses the membrane as a helical span at residues 195–215 (KVGHFVYLVVGFIITVAISFS). The Extracellular portion of the chain corresponds to 216–223 (YGWKLTLA). Residues 224–242 (VSSYIPLVILLNYYVAKFQ) traverse the membrane as a helical segment. The Cytoplasmic portion of the chain corresponds to 243–302 (GKLTAREQESYAGAGNLAEEILSSIRTVVSFGGEKSEVQRYENFLVPARKASQWKGAFSG). Residues 303–323 (LSDAVLKSMLYLSCAGAFWYG) traverse the membrane as a helical segment. The Extracellular portion of the chain corresponds to 324–341 (VNLIIDDRNVENKEYTPA). Residues 342-362 (ILMIAFFGIIVGADNIARTAP) form a helical membrane-spanning segment. At 363–731 (FLESFATARG…LQLAKQEWCY (369 aa)) the chain is on the cytoplasmic side. The region spanning 405–641 (VEFQDVFFRY…EGAYYNMVRA (237 aa)) is the ABC transporter 1 domain. Residue 440–447 (GSSGCGKS) coordinates ATP. A helical transmembrane segment spans residues 732–753 (LILGTISAVAVGFLYPAFAVIF). In terms of domain architecture, ABC transmembrane type-1 2 spans 732–1020 (LILGTISAVA…SLAFTPAFSA (289 aa)). The Extracellular segment spans residues 754-776 (GEFYAALAEKDPEDALRRTAVLS). A helical membrane pass occupies residues 777–798 (WACLGLAFLTGLVCFLQTYLFN). The Cytoplasmic segment spans residues 799–852 (YAGIWLTTRMRAMTFNAMVNQEVGWFDDENNSVGALSARLSGEAVDIQGAIGYP). A helical membrane pass occupies residues 853-873 (LSGMIQALSNFISSVSVAMYY). Residue N874 is a topological domain, extracellular. A helical transmembrane segment spans residues 875–894 (WKLALLCLANCPIIVGSVIL). Residues 895–956 (EAKMMSNAVV…VEVLIRQKLR (62 aa)) lie on the Cytoplasmic side of the membrane. A helical membrane pass occupies residues 957-977 (WRGVLNSTMQASAFFAYAVAL). Topologically, residues 978–993 (CYGGVLVSEGQLPFQD) are extracellular. A helical membrane pass occupies residues 994-1014 (IIKVSETLLYGSMMLAQSLAF). Residues 1015-1302 (TPAFSAALIA…AKLHKTQKDH (288 aa)) lie on the Cytoplasmic side of the membrane. The 240-residue stretch at 1059–1298 (VRYRGIQFRY…GGIYAKLHKT (240 aa)) folds into the ABC transporter 2 domain. 1094-1101 (GHSGCGKS) serves as a coordination point for ATP.

Belongs to the ABC transporter superfamily. ABCB family. Multidrug resistance exporter (TC 3.A.1.201) subfamily.

The protein resides in the membrane. The enzyme catalyses ATP + H2O + xenobioticSide 1 = ADP + phosphate + xenobioticSide 2.. The protein is Multidrug resistance protein homolog 65 (Mdr65) of Drosophila melanogaster (Fruit fly).